The primary structure comprises 112 residues: Large ribosomal subunit protein uL22 (112 aa).

Belongs to the universal ribosomal protein uL22 family. In terms of assembly, part of the 50S ribosomal subunit.

Functionally, this protein binds specifically to 23S rRNA; its binding is stimulated by other ribosomal proteins, e.g. L4, L17, and L20. It is important during the early stages of 50S assembly. It makes multiple contacts with different domains of the 23S rRNA in the assembled 50S subunit and ribosome. The globular domain of the protein is located near the polypeptide exit tunnel on the outside of the subunit, while an extended beta-hairpin is found that lines the wall of the exit tunnel in the center of the 70S ribosome. The chain is Large ribosomal subunit protein uL22 from Caldanaerobacter subterraneus subsp. tengcongensis (strain DSM 15242 / JCM 11007 / NBRC 100824 / MB4) (Thermoanaerobacter tengcongensis).